Reading from the N-terminus, the 105-residue chain is Nucleoid-associated protein SaurJH1_0513 (105 aa).

The disordered stretch occupies residues 1 to 33 (MRGGGNMQQMMKQMQKMQKKMAQEQKKLKEERI). Positions 7-16 (MQQMMKQMQK) are enriched in low complexity. The segment covering 21 to 33 (MAQEQKKLKEERI) has biased composition (basic and acidic residues).

It belongs to the YbaB/EbfC family. As to quaternary structure, homodimer.

It is found in the cytoplasm. The protein resides in the nucleoid. Functionally, binds to DNA and alters its conformation. May be involved in regulation of gene expression, nucleoid organization and DNA protection. This chain is Nucleoid-associated protein SaurJH1_0513, found in Staphylococcus aureus (strain JH1).